The primary structure comprises 236 residues: Large ribosomal subunit protein uL1 (236 aa).

This sequence belongs to the universal ribosomal protein uL1 family. As to quaternary structure, part of the 50S ribosomal subunit.

In terms of biological role, binds directly to 23S rRNA. The L1 stalk is quite mobile in the ribosome, and is involved in E site tRNA release. Its function is as follows. Protein L1 is also a translational repressor protein, it controls the translation of the L11 operon by binding to its mRNA. In Protochlamydia amoebophila (strain UWE25), this protein is Large ribosomal subunit protein uL1.